A 204-amino-acid chain; its full sequence is Peptidyl-tRNA hydrolase (204 aa).

Tyr14 provides a ligand contact to tRNA. His19 serves as the catalytic Proton acceptor. 3 residues coordinate tRNA: Tyr64, Asn66, and Asn112.

The protein belongs to the PTH family. Monomer.

It localises to the cytoplasm. The catalysed reaction is an N-acyl-L-alpha-aminoacyl-tRNA + H2O = an N-acyl-L-amino acid + a tRNA + H(+). Functionally, hydrolyzes ribosome-free peptidyl-tRNAs (with 1 or more amino acids incorporated), which drop off the ribosome during protein synthesis, or as a result of ribosome stalling. In terms of biological role, catalyzes the release of premature peptidyl moieties from peptidyl-tRNA molecules trapped in stalled 50S ribosomal subunits, and thus maintains levels of free tRNAs and 50S ribosomes. This Nitrobacter hamburgensis (strain DSM 10229 / NCIMB 13809 / X14) protein is Peptidyl-tRNA hydrolase.